Here is a 140-residue protein sequence, read N- to C-terminus: Nucleoside diphosphate kinase (140 aa).

Residues Lys9, Phe57, Arg85, Thr91, Arg102, and Asn112 each coordinate ATP. His115 serves as the catalytic Pros-phosphohistidine intermediate.

Belongs to the NDK family. Homotetramer. Mg(2+) serves as cofactor.

Its subcellular location is the cytoplasm. It carries out the reaction a 2'-deoxyribonucleoside 5'-diphosphate + ATP = a 2'-deoxyribonucleoside 5'-triphosphate + ADP. The enzyme catalyses a ribonucleoside 5'-diphosphate + ATP = a ribonucleoside 5'-triphosphate + ADP. Its function is as follows. Major role in the synthesis of nucleoside triphosphates other than ATP. The ATP gamma phosphate is transferred to the NDP beta phosphate via a ping-pong mechanism, using a phosphorylated active-site intermediate. The polypeptide is Nucleoside diphosphate kinase (Chlorobaculum tepidum (strain ATCC 49652 / DSM 12025 / NBRC 103806 / TLS) (Chlorobium tepidum)).